The chain runs to 637 residues: Type II restriction enzyme and methyltransferase RM.BcgI (637 aa).

In the C-terminal section; belongs to the N(4)/N(6)-methyltransferase family. As to quaternary structure, heterotrimer of two A and one B subunit. Both subunits are necessary for DNA-binding, which is sequence non-specific. It depends on Mg(2+) as a cofactor.

The enzyme catalyses Endonucleolytic cleavage of DNA to give specific double-stranded fragments with terminal 5'-phosphates.. It carries out the reaction a 2'-deoxyadenosine in DNA + S-adenosyl-L-methionine = an N(6)-methyl-2'-deoxyadenosine in DNA + S-adenosyl-L-homocysteine + H(+). With respect to regulation, DNA restriction requires S-adenosyl-L-methionine and Mg(2+), and is inhibited by S-adenosyl-homocysteine. SAM may be a cofactor for DNA restriction. Its function is as follows. A B, G, H and S subtype restriction enzyme that recognizes the double-stranded sequence 5'-CGAN(6)TGC-3' and cleaves bilaterally and symmetrically 10 base pairs upstream and 12 base pairs downstream of the sequence to release a 34-base pair fragment. Methylation of the recognition sequence occurs on the adenine in either one or both strands; seems to methylate restricted DNA. This subunit has no methylation or DNA restriction activity on its own. The protein is Type II restriction enzyme and methyltransferase RM.BcgI of Heyndrickxia coagulans (Weizmannia coagulans).